A 301-amino-acid polypeptide reads, in one-letter code: MATSNSSDSSMSAEVPAPYGNGPANAPATPSDTAKKPVARIRTHHLQQAKDKGEHFAMLTAYEQYTAEIFDEAGIEVLLVGDSASNNVFGNETSLPVTVDELLPLCRAVARSAKRALVVADLPFGSYEVSAEQAVATGVRFLKEGLAHAVKIEGGKFYADTVRAMVQAGIPVMAHIGFTPQSEHSLGGYRVQGRGDDAQRLIDDAVALAEAGAFSVLMEMVPAATAAAVDAAIAVPTVGIGAGNTTTGQVLVWQDMAGLRGGKMAKFVKQYADLRTSLSNAAKAYGDDVRTGQFPGPEHSF.

Positions 1–28 (MATSNSSDSSMSAEVPAPYGNGPANAPA) are enriched in low complexity. The interval 1–37 (MATSNSSDSSMSAEVPAPYGNGPANAPATPSDTAKKP) is disordered. Mg(2+)-binding residues include D82 and D121. Residues 82–83 (DS), D121, and K151 each bind 3-methyl-2-oxobutanoate. E153 contacts Mg(2+). E219 serves as the catalytic Proton acceptor.

The protein belongs to the PanB family. In terms of assembly, homodecamer; pentamer of dimers. The cofactor is Mg(2+).

The protein localises to the cytoplasm. The enzyme catalyses 3-methyl-2-oxobutanoate + (6R)-5,10-methylene-5,6,7,8-tetrahydrofolate + H2O = 2-dehydropantoate + (6S)-5,6,7,8-tetrahydrofolate. The protein operates within cofactor biosynthesis; (R)-pantothenate biosynthesis; (R)-pantoate from 3-methyl-2-oxobutanoate: step 1/2. Its function is as follows. Catalyzes the reversible reaction in which hydroxymethyl group from 5,10-methylenetetrahydrofolate is transferred onto alpha-ketoisovalerate to form ketopantoate. The chain is 3-methyl-2-oxobutanoate hydroxymethyltransferase from Arthrobacter sp. (strain FB24).